The sequence spans 684 residues: Probable Xaa-Pro aminopeptidase P (684 aa).

Positions 481, 492, 590, and 604 each coordinate Mn(2+).

It belongs to the peptidase M24B family. Mn(2+) is required as a cofactor.

The enzyme catalyses Release of any N-terminal amino acid, including proline, that is linked to proline, even from a dipeptide or tripeptide.. Functionally, catalyzes the removal of a penultimate prolyl residue from the N-termini of peptides. The polypeptide is Probable Xaa-Pro aminopeptidase P (ampp) (Neurospora crassa (strain ATCC 24698 / 74-OR23-1A / CBS 708.71 / DSM 1257 / FGSC 987)).